Consider the following 110-residue polypeptide: MSEVKASLKGARLSAQKARLVVDQIRGKSVSEALNILTFSPKKAAVIVKKVLESAIANAEHNEGADVDDLRVSTAYVDEAMTLKRIMPRAKGRADRILKRGCHITVKVAD.

The protein belongs to the universal ribosomal protein uL22 family. Part of the 50S ribosomal subunit.

Its function is as follows. This protein binds specifically to 23S rRNA; its binding is stimulated by other ribosomal proteins, e.g. L4, L17, and L20. It is important during the early stages of 50S assembly. It makes multiple contacts with different domains of the 23S rRNA in the assembled 50S subunit and ribosome. The globular domain of the protein is located near the polypeptide exit tunnel on the outside of the subunit, while an extended beta-hairpin is found that lines the wall of the exit tunnel in the center of the 70S ribosome. The sequence is that of Large ribosomal subunit protein uL22 from Marinomonas sp. (strain MWYL1).